Consider the following 437-residue polypeptide: Enolase (437 aa).

Gln162 contributes to the (2R)-2-phosphoglycerate binding site. Glu204 serves as the catalytic Proton donor. Mg(2+)-binding residues include Asp251, Glu297, and Asp324. Lys349, Arg378, Ser379, and Lys400 together coordinate (2R)-2-phosphoglycerate. The Proton acceptor role is filled by Lys349.

This sequence belongs to the enolase family. Mg(2+) is required as a cofactor.

The protein resides in the cytoplasm. It localises to the secreted. The protein localises to the cell surface. The catalysed reaction is (2R)-2-phosphoglycerate = phosphoenolpyruvate + H2O. It functions in the pathway carbohydrate degradation; glycolysis; pyruvate from D-glyceraldehyde 3-phosphate: step 4/5. Functionally, catalyzes the reversible conversion of 2-phosphoglycerate (2-PG) into phosphoenolpyruvate (PEP). It is essential for the degradation of carbohydrates via glycolysis. The chain is Enolase from Chlorobium limicola (strain DSM 245 / NBRC 103803 / 6330).